A 346-amino-acid chain; its full sequence is Propane 2-monooxygenase, reductase component (346 aa).

The 90-residue stretch at 5–94 folds into the 2Fe-2S ferredoxin-type domain; it reads HKISFEPVDI…DCEIELLNFD (90 aa). 4 residues coordinate [2Fe-2S] cluster: cysteine 39, cysteine 44, cysteine 46, and cysteine 78. An FAD-binding FR-type domain is found at 104 to 205; that stretch reads IQDVTTKVAA…NGPYGSCTLR (102 aa).

This sequence belongs to the bacterial ring-hydroxylating dioxygenase ferredoxin reductase family. As to quaternary structure, the propane 2-monooxygenase multicomponent enzyme system is composed of an electron transfer component and a monooxygenase component interacting with the effector protein PrmD. The electron transfer component is composed of a reductase (PrmB), and the monooxygenase component is formed by a large subunit (PrmA) and a small subunit (PrmC). It depends on FAD as a cofactor. [2Fe-2S] cluster serves as cofactor.

Reductase component of the propane 2-monooxygenase multicomponent enzyme system which is involved in the degradation of propane via the O2-dependent hydroxylation of propane. Reductase catalyzes the transfer of electrons from NADH or NADPH to monooxygenase. This is Propane 2-monooxygenase, reductase component from Gordonia sp. (strain TY-5).